The following is a 488-amino-acid chain: UDP-N-acetylmuramate--L-alanine ligase (488 aa).

ATP is bound at residue 129-135 (GTHGKTT).

The protein belongs to the MurCDEF family.

Its subcellular location is the cytoplasm. The catalysed reaction is UDP-N-acetyl-alpha-D-muramate + L-alanine + ATP = UDP-N-acetyl-alpha-D-muramoyl-L-alanine + ADP + phosphate + H(+). The protein operates within cell wall biogenesis; peptidoglycan biosynthesis. Cell wall formation. The protein is UDP-N-acetylmuramate--L-alanine ligase of Chromohalobacter salexigens (strain ATCC BAA-138 / DSM 3043 / CIP 106854 / NCIMB 13768 / 1H11).